The sequence spans 734 residues: MATKFPKFSQALSQDPTTRRIWYGIATAHDFESHDGMTEENLYQKIFASHFGHLAIIFLWTSGNLFHVAWQGNFEQWILNPLKVKPIAHAIWDPHFGQPALKAFSKGGSAYPVNIAYSGVYHWWYTIGMRTNQDLYTGALFLLVLSAILLFGGWLHLQPKFKPGLSWFKNNESRLNHHLSGLFGVSSLAWTGHLVHVAIPESRGQHVGWDNFTTVLPHPAGLQPFFSGNWSVYAQNPDTAQQLFGTNEGAGTAILTFLGGFHPQSQSLWLTDMAHHHLAIAVVFIVAGHMYRTNWGIGHNLKDILDAHRPPSGRLGAGHRGLFDTITNSLHMQLGLALAALGVITSLVAQHMYAMPPYAFMAKDFTTQASLYTHHQYIAGFLMVGAFAHGAIFFVRDYDPEQNKGNVLARMLEHKEAIISHLSWVTLFLGFHTLGLYVHNDTMIAFGTPEKQILIEPVFAQWIQASSGKALYGFDVLLSSSSNIATQAGSNIWLPGWLEAINSGKNSLFLTIGPGDFLVHHAIALGLHTTALILVKGALDARGSKLMPDKKDFGYSFPCDGPGRGGTCDISAWDAFYLAVFWMLNTIGWVTFYWHWKHITIWQGNATQFNESSTYLMGWFRDYLWLNSSPLINGYNPYGMNNLSVWSWMFLFGHLVWATGFMFLISWRGYWQELIETLAWAHERTPLANLIRWKDKPVAMSIVQARLVGLAHFSVGYVLTYAAFVLASTAGKFG.

8 helical membrane passes run 46 to 69 (IFAS…FHVA), 135 to 158 (LYTG…LHLQ), 175 to 199 (LNHH…HVAI), 273 to 291 (MAHH…GHMY), 330 to 353 (LHMQ…QHMY), 369 to 395 (ASLY…IFFV), 417 to 439 (AIIS…LYVH), and 517 to 535 (FLVH…LILV). Positions 559 and 568 each coordinate [4Fe-4S] cluster. Helical transmembrane passes span 575–596 (AFYL…YWHW) and 643–665 (LSVW…MFLI). Positions 654, 662, and 670 each coordinate chlorophyll a. W671 lines the phylloquinone pocket. Residues 707–727 (LVGLAHFSVGYVLTYAAFVLA) form a helical membrane-spanning segment.

It belongs to the PsaA/PsaB family. The PsaA/B heterodimer binds the P700 chlorophyll special pair and subsequent electron acceptors. PSI consists of a core antenna complex that captures photons, and an electron transfer chain that converts photonic excitation into a charge separation. The eukaryotic PSI reaction center is composed of at least 11 subunits. P700 is a chlorophyll a/chlorophyll a' dimer, A0 is one or more chlorophyll a, A1 is one or both phylloquinones and FX is a shared 4Fe-4S iron-sulfur center. is required as a cofactor.

Its subcellular location is the plastid. It localises to the chloroplast thylakoid membrane. It carries out the reaction reduced [plastocyanin] + hnu + oxidized [2Fe-2S]-[ferredoxin] = oxidized [plastocyanin] + reduced [2Fe-2S]-[ferredoxin]. Its function is as follows. PsaA and PsaB bind P700, the primary electron donor of photosystem I (PSI), as well as the electron acceptors A0, A1 and FX. PSI is a plastocyanin/cytochrome c6-ferredoxin oxidoreductase, converting photonic excitation into a charge separation, which transfers an electron from the donor P700 chlorophyll pair to the spectroscopically characterized acceptors A0, A1, FX, FA and FB in turn. Oxidized P700 is reduced on the lumenal side of the thylakoid membrane by plastocyanin or cytochrome c6. The sequence is that of Photosystem I P700 chlorophyll a apoprotein A2 from Porphyra purpurea (Red seaweed).